Consider the following 218-residue polypeptide: Small ribosomal subunit protein uS3c (218 aa).

The 76-residue stretch at 43–118 (IKNYVQKNMK…KLNISITRIE (76 aa)) folds into the KH type-2 domain.

This sequence belongs to the universal ribosomal protein uS3 family. Part of the 30S ribosomal subunit.

It localises to the plastid. Its subcellular location is the chloroplast. The sequence is that of Small ribosomal subunit protein uS3c (rps3) from Populus trichocarpa (Western balsam poplar).